We begin with the raw amino-acid sequence, 719 residues long: Serine/threonine-protein kinase PAK 5 (719 aa).

Disordered regions lie at residues 1-28 (MFGK…FDPQ), 96-118 (RSNS…RIQG), 226-245 (SPLD…TSRC), 253-298 (SESD…PMMP), and 339-372 (VFSP…GSHQ). Residues 11-24 (ISGPSNFEHRVHTG) enclose the CRIB domain. The linker stretch occupies residues 25–448 (FDPQEQKFTG…VVSPGDPREY (424 aa)). Phosphoserine is present on Ser104. Phosphothreonine is present on Thr107. Polar residues predominate over residues 226-244 (SPLDYSFQLTPSRTAGTSR). Residues 357–372 (LPQSQSKAGYSSGSHQ) are compositionally biased toward polar residues. A Protein kinase domain is found at 449–700 (LDNFIKIGEG…AQELLGHPFL (252 aa)). ATP-binding positions include 455-463 (IGEGSTGIV) and Lys478. Asp568 (proton acceptor) is an active-site residue.

Belongs to the protein kinase superfamily. STE Ser/Thr protein kinase family. STE20 subfamily. As to quaternary structure, interacts tightly with GTP-bound but not GDP-bound CDC42/p21 and RAC1. Interacts with MARK2, leading to inhibit MARK2 independently of kinase activity. Interacts with RHOD and RHOH. Autophosphorylated when activated by CDC42/p21. As to expression, highly expressed in brain and eye. Also expressed in adrenal gland, pancreas, prostate and testes. Within the brain, expression is restricted to neurons. Present in brain but not in kidney, lung and spleen (at protein level).

Its subcellular location is the mitochondrion. The protein localises to the cytoplasm. It is found in the nucleus. The enzyme catalyses L-seryl-[protein] + ATP = O-phospho-L-seryl-[protein] + ADP + H(+). It carries out the reaction L-threonyl-[protein] + ATP = O-phospho-L-threonyl-[protein] + ADP + H(+). Functionally, serine/threonine protein kinase that plays a role in a variety of different signaling pathways including cytoskeleton regulation, cell migration, proliferation or cell survival. Activation by various effectors including growth factor receptors or active CDC42 and RAC1 results in a conformational change and a subsequent autophosphorylation on several serine and/or threonine residues. Phosphorylates the proto-oncogene RAF1 and stimulates its kinase activity. Promotes cell survival by phosphorylating the BCL2 antagonist of cell death BAD. Phosphorylates CTNND1, probably to regulate cytoskeletal organization and cell morphology. Keeps microtubules stable through MARK2 inhibition and destabilizes the F-actin network leading to the disappearance of stress fibers and focal adhesions. This Mus musculus (Mouse) protein is Serine/threonine-protein kinase PAK 5.